The following is a 989-amino-acid chain: E3 ubiquitin-protein ligase Arkadia (989 aa).

Residues Lys-19, Lys-33, Lys-46, Lys-58, Lys-72, Lys-86, Lys-95, and Lys-109 each participate in a glycyl lysine isopeptide (Lys-Gly) (interchain with G-Cter in SUMO2) cross-link. The segment at 63-195 (FSHLCDDSQK…TEADPVPSLL (133 aa)) is disordered. A compositionally biased stretch (basic and acidic residues) spans 65-88 (HLCDDSQKQEKDMTGNQQEQEKSG). A compositionally biased stretch (polar residues) spans 97–109 (QQAGPSYVQNCVK). The span at 110-120 (ENQEILGRRQQ) shows a compositional bias: basic and acidic residues. Low complexity predominate over residues 131-144 (SSLSECLSSPSSSL). Residue Lys-172 forms a Glycyl lysine isopeptide (Lys-Gly) (interchain with G-Cter in SUMO2) linkage. The span at 173 to 183 (SRSHSARSHKW) shows a compositional bias: basic residues. Residues Lys-197 and Lys-217 each participate in a glycyl lysine isopeptide (Lys-Gly) (interchain with G-Cter in SUMO2) cross-link. Positions 213–293 (KRLVKSSSSQ…PSNPAAPSGS (81 aa)) are disordered. The interaction with AXIN1 stretch occupies residues 240–402 (ALAQRKYALL…VPTTSARMDS (163 aa)). Low complexity-rich tracts occupy residues 248–270 (LLSS…SSST) and 278–291 (ASAS…AAPS). The SUMO interaction motif 1 (SIM) motif lies at 298-302 (VVVIE). The SUMO interaction motif 2 (SIM) motif lies at 323 to 329 (EVEIVTV). The tract at residues 335–367 (SRSTLGHSRSHWSQGSSSHTGRPQESRNRSRIS) is disordered. The span at 345 to 355 (HWSQGSSSHTG) shows a compositional bias: low complexity. The SUMO interaction motif 3 (SIM) motif lies at 380–384 (VVDLT). Disordered stretches follow at residues 388 to 475 (DEPT…MPRL), 506 to 559 (HGHH…YHDQ), and 641 to 675 (MPPP…PPPQ). Residues 393–451 (VPTTSARMDSQTTSASINNSNPSTSEQASDTTSTVASSQPSTVSETEATLTSNSATGSS) show a composition bias toward polar residues. Positions 506–520 (HGHHFQHHHHHHHTP) are enriched in basic residues. Over residues 548–558 (ANSSSGSSYHD) the composition is skewed to polar residues. A ubiquitin binding region spans residues 902-904 (YPH). Residues Lys-918 and Lys-922 each participate in a glycyl lysine isopeptide (Lys-Gly) (interchain with G-Cter in SUMO2) cross-link. Residues Cys-937 and Cys-940 each contribute to the Zn(2+) site. The segment at 937-978 (CTICLSILEEGEDVRRLPCMHLFHQVCVDQWLITNKKCPICR) adopts an RING-type; atypical zinc-finger fold. A ubiquitin binding region spans residues 952-956 (RLPCM). Zn(2+) contacts are provided by His-960 and Cys-963.

The protein belongs to the Arkadia family. As to quaternary structure, monomer. Interacts with SMAD6, SMAD7, AXIN1, AXIN2 and SKIL isoform SNON. Interacts with (phosphorylated) SMAD2 and SMAD3. Part of a complex containing RNF111, AXIN1 and SMAD7. Interacts (via SIM domains) with SUMO1 and SUMO2. Ubiquitously expressed.

Its subcellular location is the nucleus. It localises to the cytoplasm. The protein resides in the PML body. The enzyme catalyses S-ubiquitinyl-[E2 ubiquitin-conjugating enzyme]-L-cysteine + [acceptor protein]-L-lysine = [E2 ubiquitin-conjugating enzyme]-L-cysteine + N(6)-ubiquitinyl-[acceptor protein]-L-lysine.. The protein operates within protein modification; protein ubiquitination. Its activity is regulated as follows. Binds free ubiquitin non-covalently via its RING-type zinc finger. Ubiquitin-binding leads to enhance the E3 ubiquitin-protein ligase activity by stabilizing the ubiquitin-conjugating enzyme E2 (donor ubiquitin) in the 'closed' conformation and activating ubiquitin transfer. Its function is as follows. E3 ubiquitin-protein ligase required for mesoderm patterning during embryonic development. Acts as an enhancer of the transcriptional responses of the SMAD2/SMAD3 effectors, which are activated downstream of BMP. Acts by mediating ubiquitination and degradation of SMAD inhibitors such as SMAD7, inducing their proteasomal degradation and thereby enhancing the transcriptional activity of TGF-beta and BMP. In addition to enhance transcription of SMAD2/SMAD3 effectors, also regulates their turnover by mediating their ubiquitination and subsequent degradation, coupling their activation with degradation, thereby ensuring that only effectors 'in use' are degraded. Activates SMAD3/SMAD4-dependent transcription by triggering signal-induced degradation of SNON isoform of SKIL. Associates with UBE2D2 as an E2 enzyme. Specifically binds polysumoylated chains via SUMO interaction motifs (SIMs) and mediates ubiquitination of sumoylated substrates. Catalyzes 'Lys-63'-linked ubiquitination of sumoylated XPC in response to UV irradiation, promoting nucleotide excision repair. Mediates ubiquitination and degradation of sumoylated PML. The regulation of the BMP-SMAD signaling is however independent of sumoylation and is not dependent of SUMO interaction motifs (SIMs). The polypeptide is E3 ubiquitin-protein ligase Arkadia (Mus musculus (Mouse)).